A 581-amino-acid polypeptide reads, in one-letter code: Phosphoglucomutase, cytoplasmic (581 aa).

The span at 1 to 11 shows a compositional bias: basic and acidic residues; the sequence is MVFSVAKKDTT. The interval 1–20 is disordered; that stretch reads MVFSVAKKDTTPYEGQKPGT. The alpha-D-glucose 1,6-bisphosphate site is built by arginine 24 and serine 123. Serine 123 serves as the catalytic Phosphoserine intermediate. Mg(2+)-binding residues include serine 123, aspartate 298, aspartate 300, and aspartate 302. Serine 123 carries the post-translational modification Phosphoserine. 6 residues coordinate alpha-D-glucose 1,6-bisphosphate: aspartate 302, arginine 303, threonine 366, glutamate 385, serine 387, and lysine 398.

This sequence belongs to the phosphohexose mutase family. Monomer. The cofactor is Mg(2+).

The protein localises to the cytoplasm. It carries out the reaction alpha-D-glucose 1-phosphate = alpha-D-glucose 6-phosphate. The enzyme catalyses O-phospho-L-seryl-[protein] + alpha-D-glucose 1-phosphate = alpha-D-glucose 1,6-bisphosphate + L-seryl-[protein]. The catalysed reaction is alpha-D-glucose 1,6-bisphosphate + L-seryl-[protein] = O-phospho-L-seryl-[protein] + alpha-D-glucose 6-phosphate. In terms of biological role, catalyzes the reversible isomerization of alpha-D-glucose 1-phosphate to alpha-D-glucose 6-phosphate. The mechanism proceeds via the intermediate compound alpha-D-glucose 1,6-bisphosphate. This enzyme participates in both the breakdown and synthesis of glucose. The chain is Phosphoglucomutase, cytoplasmic (PGM1) from Bromus inermis (Smooth brome grass).